The sequence spans 1372 residues: DNA-directed RNA polymerase subunit beta'' (1372 aa).

Residues C252, C321, C328, and C331 each coordinate Zn(2+).

This sequence belongs to the RNA polymerase beta' chain family. RpoC2 subfamily. As to quaternary structure, in plastids the minimal PEP RNA polymerase catalytic core is composed of four subunits: alpha, beta, beta', and beta''. When a (nuclear-encoded) sigma factor is associated with the core the holoenzyme is formed, which can initiate transcription. Zn(2+) serves as cofactor.

Its subcellular location is the plastid. The protein resides in the organellar chromatophore. The enzyme catalyses RNA(n) + a ribonucleoside 5'-triphosphate = RNA(n+1) + diphosphate. Its function is as follows. DNA-dependent RNA polymerase catalyzes the transcription of DNA into RNA using the four ribonucleoside triphosphates as substrates. The chain is DNA-directed RNA polymerase subunit beta'' from Paulinella chromatophora.